The sequence spans 268 residues: Tryptophan synthase alpha chain (268 aa).

Residues E49 and D60 each act as proton acceptor in the active site.

The protein belongs to the TrpA family. In terms of assembly, tetramer of two alpha and two beta chains.

It carries out the reaction (1S,2R)-1-C-(indol-3-yl)glycerol 3-phosphate + L-serine = D-glyceraldehyde 3-phosphate + L-tryptophan + H2O. It functions in the pathway amino-acid biosynthesis; L-tryptophan biosynthesis; L-tryptophan from chorismate: step 5/5. Its function is as follows. The alpha subunit is responsible for the aldol cleavage of indoleglycerol phosphate to indole and glyceraldehyde 3-phosphate. This chain is Tryptophan synthase alpha chain, found in Shigella dysenteriae serotype 1 (strain Sd197).